Consider the following 244-residue polypeptide: Cell division protein DivIB (244 aa).

Topologically, residues 1–6 (MKIKWP) are cytoplasmic. Residues 7–27 (LQLWISLAVFVTIAVGTLLLL) form a helical membrane-spanning segment. Residues 28–104 (QPWQTIKTVT…IDIAEKVTAG (77 aa)) enclose the POTRA domain. At 28-244 (QPWQTIKTVT…KADNKAHQKQ (217 aa)) the chain is on the extracellular side.

Belongs to the FtsQ/DivIB family. DivIB subfamily.

It is found in the cell membrane. Cell division protein that may be involved in stabilizing or promoting the assembly of the division complex. The protein is Cell division protein DivIB of Leuconostoc kimchii (strain IMSNU 11154 / KCTC 2386 / IH25).